The primary structure comprises 208 residues: Large ribosomal subunit protein uL4 (208 aa).

The disordered stretch occupies residues 50-83 (VKTRAEVSGGGRKPWKQKGTGRARQGSIRAPQWK).

It belongs to the universal ribosomal protein uL4 family. In terms of assembly, part of the 50S ribosomal subunit.

In terms of biological role, one of the primary rRNA binding proteins, this protein initially binds near the 5'-end of the 23S rRNA. It is important during the early stages of 50S assembly. It makes multiple contacts with different domains of the 23S rRNA in the assembled 50S subunit and ribosome. Forms part of the polypeptide exit tunnel. This is Large ribosomal subunit protein uL4 from Mycoplasma mycoides subsp. mycoides SC (strain CCUG 32753 / NCTC 10114 / PG1).